The sequence spans 329 residues: Beta-ketoacyl-[acyl-carrier-protein] synthase III (329 aa).

Residues cysteine 112 and histidine 253 contribute to the active site. The tract at residues 254–258 is ACP-binding; it reads QANQR. The active site involves asparagine 283.

Belongs to the thiolase-like superfamily. FabH family. As to quaternary structure, homodimer.

The protein resides in the cytoplasm. It catalyses the reaction malonyl-[ACP] + acetyl-CoA + H(+) = 3-oxobutanoyl-[ACP] + CO2 + CoA. The protein operates within lipid metabolism; fatty acid biosynthesis. In terms of biological role, catalyzes the condensation reaction of fatty acid synthesis by the addition to an acyl acceptor of two carbons from malonyl-ACP. Catalyzes the first condensation reaction which initiates fatty acid synthesis and may therefore play a role in governing the total rate of fatty acid production. Possesses both acetoacetyl-ACP synthase and acetyl transacylase activities. Its substrate specificity determines the biosynthesis of branched-chain and/or straight-chain of fatty acids. This Gloeobacter violaceus (strain ATCC 29082 / PCC 7421) protein is Beta-ketoacyl-[acyl-carrier-protein] synthase III.